The chain runs to 147 residues: Protein SPMIP3 (147 aa).

The polypeptide is Protein SPMIP3 (Homo sapiens (Human)).